A 504-amino-acid chain; its full sequence is Cytochrome P450 3A11 (504 aa).

Cysteine 443 is a heme binding site.

Belongs to the cytochrome P450 family. Requires heme as cofactor. As to expression, highly expressed in liver.

Its subcellular location is the endoplasmic reticulum membrane. It localises to the microsome membrane. The enzyme catalyses an organic molecule + reduced [NADPH--hemoprotein reductase] + O2 = an alcohol + oxidized [NADPH--hemoprotein reductase] + H2O + H(+). Functionally, catalyzes erythromycin N-demethylation, nifedipine oxidation and testosterone 6 beta-hydroxylation. The sequence is that of Cytochrome P450 3A11 (Cyp3a11) from Mus musculus (Mouse).